Consider the following 300-residue polypeptide: Chaperone protein dnaJ 50 (300 aa).

Positions Met1–Ala27 are cleaved as a signal peptide. Residues Ile28–Pro122 lie on the Lumenal side of the membrane. A J domain is found at Asp34–Ile98. N-linked (GlcNAc...) asparagine glycosylation is found at Asn46 and Asn88. A helical transmembrane segment spans residues Arg123–Ala143. The Cytoplasmic portion of the chain corresponds to Arg144 to Ser206. A helical transmembrane segment spans residues Val207 to Val227. The Lumenal segment spans residues Trp228–Arg300.

In terms of tissue distribution, expressed in leaves, flower buds and flowers.

The protein resides in the endoplasmic reticulum membrane. May play a role in protein folding in the endoplasmic reticulum. The polypeptide is Chaperone protein dnaJ 50 (C50) (Arabidopsis thaliana (Mouse-ear cress)).